The sequence spans 457 residues: Phosphoglucosamine mutase (457 aa).

The active-site Phosphoserine intermediate is the Ser-103. Mg(2+) is bound by residues Ser-103, Asp-245, Asp-247, and Asp-249. Residue Ser-103 is modified to Phosphoserine.

This sequence belongs to the phosphohexose mutase family. Mg(2+) is required as a cofactor. In terms of processing, activated by phosphorylation.

The enzyme catalyses alpha-D-glucosamine 1-phosphate = D-glucosamine 6-phosphate. In terms of biological role, catalyzes the conversion of glucosamine-6-phosphate to glucosamine-1-phosphate. This is Phosphoglucosamine mutase from Syntrophotalea carbinolica (strain DSM 2380 / NBRC 103641 / GraBd1) (Pelobacter carbinolicus).